Here is a 308-residue protein sequence, read N- to C-terminus: Glycerol-3-phosphate dehydrogenase [NAD(P)+] (308 aa).

4 residues coordinate NADPH: tryptophan 15, arginine 35, arginine 36, and lysine 83. Sn-glycerol 3-phosphate is bound by residues lysine 83 and glycine 111. An NADPH-binding site is contributed by serine 115. Residues lysine 166, aspartate 219, serine 229, arginine 230, and asparagine 231 each coordinate sn-glycerol 3-phosphate. Lysine 166 acts as the Proton acceptor in catalysis. Arginine 230 is a binding site for NADPH. Glutamate 256 provides a ligand contact to NADPH.

It belongs to the NAD-dependent glycerol-3-phosphate dehydrogenase family.

It is found in the cytoplasm. It catalyses the reaction sn-glycerol 3-phosphate + NAD(+) = dihydroxyacetone phosphate + NADH + H(+). The catalysed reaction is sn-glycerol 3-phosphate + NADP(+) = dihydroxyacetone phosphate + NADPH + H(+). The protein operates within membrane lipid metabolism; glycerophospholipid metabolism. Its function is as follows. Catalyzes the reduction of the glycolytic intermediate dihydroxyacetone phosphate (DHAP) to sn-glycerol 3-phosphate (G3P), the key precursor for phospholipid synthesis. This chain is Glycerol-3-phosphate dehydrogenase [NAD(P)+], found in Synechococcus elongatus (strain ATCC 33912 / PCC 7942 / FACHB-805) (Anacystis nidulans R2).